We begin with the raw amino-acid sequence, 261 residues long: Flagellar L-ring protein (261 aa).

The signal sequence occupies residues 1 to 18 (MAAMKRLLASSLLILLSG). Cys-19 is lipidated: N-palmitoyl cysteine. Residue Cys-19 is the site of S-diacylglycerol cysteine attachment. Positions 37–67 (TVDAVEGDKSESNSGLTDALRNRTDPVAGDP) are disordered.

The protein belongs to the FlgH family. As to quaternary structure, the basal body constitutes a major portion of the flagellar organelle and consists of four rings (L,P,S, and M) mounted on a central rod.

The protein resides in the cell outer membrane. It is found in the bacterial flagellum basal body. In terms of biological role, assembles around the rod to form the L-ring and probably protects the motor/basal body from shearing forces during rotation. In Vibrio cholerae serotype O1 (strain ATCC 39541 / Classical Ogawa 395 / O395), this protein is Flagellar L-ring protein.